A 66-amino-acid polypeptide reads, in one-letter code: U10-theraphotoxin-Cg1a 1 (66 aa).

The first 21 residues, 1 to 21 (MKTSVLFVIFGLALLFCLSFA), serve as a signal peptide directing secretion. Residues 22–29 (AELEDTGR) constitute a propeptide that is removed on maturation. 3 cysteine pairs are disulfide-bonded: Cys-31-Cys-46, Cys-38-Cys-51, and Cys-45-Cys-58.

It belongs to the neurotoxin 10 (Hwtx-1) family. 29 (Jztx-13) subfamily. Expressed by the venom gland.

The protein resides in the secreted. Its function is as follows. Probable ion channel inhibitor. In Chilobrachys guangxiensis (Chinese earth tiger tarantula), this protein is U10-theraphotoxin-Cg1a 1.